Consider the following 558-residue polypeptide: Nuclear speckle splicing regulatory protein 1 (558 aa).

Residues 21-54 (PVLQKPSVFGNDSDDDDETSVSESLQREAAKKQA) form a disordered region. Phosphoserine occurs at positions 27 and 33. Positions 104-170 (IHNLLKAVEI…REKRAAALEA (67 aa)) form a coiled coil. The tract at residues 106–170 (NLLKAVEIRK…REKRAAALEA (65 aa)) is necessary for alternative splicing activity. Glycyl lysine isopeptide (Lys-Gly) (interchain with G-Cter in SUMO2) cross-links involve residues K199 and K210. Positions 204 to 215 (EARSGIKEEKSR) are enriched in basic and acidic residues. The segment at 204–534 (EARSGIKEEK…KRNNEETVMS (331 aa)) is disordered. Positions 216–226 (GFSNEVSSKNR) are enriched in polar residues. Phosphoserine occurs at positions 248, 254, and 255. Residues 250 to 280 (FDAKSSADDEIEETRVNCRREKVIETPENDF) are compositionally biased toward basic and acidic residues. Residue T275 is modified to Phosphothreonine. K281 is covalently cross-linked (Glycyl lysine isopeptide (Lys-Gly) (interchain with G-Cter in SUMO2)). The span at 299 to 310 (STRHHTKGSRTS) shows a compositional bias: basic residues. 3 stretches are compositionally biased toward basic and acidic residues: residues 311 to 442 (RGHE…KREV), 449 to 487 (RNQDRKESSPNSRAKDKFLDQERSNKMRNMAKDKERNQE), and 501 to 517 (RLTEEGQEKGKEQERPP). A coiled-coil region spans residues 379 to 427 (KREKDREKYSQREQERDRQQNDQNRPSEKGEKEEKSKAKEEHMKVRKER). A Phosphoserine modification is found at S457.

Belongs to the NSRP1 family. In terms of assembly, interacts (via C-terminus) with SRSF1. Interacts (via C-terminus) with SRSF2. In terms of tissue distribution, expressed in dendritic cells, T-cells, B-cells and natural killer cells. Expressed in secondary lymphoid organs such as spleen and mesenteric, axillary and brachial lymph nodes.

Its subcellular location is the nucleus. The protein resides in the nucleus speckle. Functionally, RNA-binding protein that mediates pre-mRNA alternative splicing regulation. The sequence is that of Nuclear speckle splicing regulatory protein 1 (NSRP1) from Homo sapiens (Human).